The chain runs to 1039 residues: DIS3-like exonuclease 1 (1039 aa).

The 89-residue stretch at 221–309 folds into the CSD1 domain; the sequence is PEHLPLEILE…KGRNGALCEN (89 aa). The CSD2 domain maps to 359 to 425; sequence VLVMPWDYRI…AEIATILVEN (67 aa). Positions 458 to 807 constitute an RNB domain; that stretch reads RLDLRKTHLV…VHRLLLAAVN (350 aa).

Belongs to the RNR ribonuclease family. In terms of assembly, component of the RNA exosome complex. The cofactor is Mg(2+).

It is found in the cytoplasm. It carries out the reaction Exonucleolytic cleavage in the 3'- to 5'-direction to yield nucleoside 5'-phosphates.. Catalytic component of the RNA exosome complex which has 3'-&gt;5' exoribonuclease activity and participates in a multitude of cellular RNA processing and degradation events. The protein is DIS3-like exonuclease 1 (dis3l) of Xenopus tropicalis (Western clawed frog).